A 213-amino-acid polypeptide reads, in one-letter code: MIAAPDRTPLTREFFARPVLDVAPDLLGRVLVRTTPDGPIELRVTEVEAYDGPSDPGSHAYRGRTARNGVMFGPPGHVYVYFTYGMWHCMNLVCGPEGRASAVLLRAGEIIEGAELARTRRLSARNDKELAKGPARLATALEVDRALDGTDACAPEGGPLTLLSGTPVPPDQVRNGPRTGVSGDGGVHPWRFWIDNDPTVSPYRAHTPRRRRT.

The tract at residues 165 to 187 (GTPVPPDQVRNGPRTGVSGDGGV) is disordered.

It belongs to the DNA glycosylase MPG family.

This is Putative 3-methyladenine DNA glycosylase from Streptomyces avermitilis (strain ATCC 31267 / DSM 46492 / JCM 5070 / NBRC 14893 / NCIMB 12804 / NRRL 8165 / MA-4680).